The primary structure comprises 420 residues: UPF0229 protein LPC_3097 (420 aa).

The tract at residues 83-107 (IAGDRIKRPGGGAGGAGGNASDSGE) is disordered. A compositionally biased stretch (gly residues) spans 91 to 100 (PGGGAGGAGG).

This sequence belongs to the UPF0229 family.

The chain is UPF0229 protein LPC_3097 from Legionella pneumophila (strain Corby).